We begin with the raw amino-acid sequence, 80 residues long: RNA-binding protein Hfq (80 aa).

A Sm domain is found at 10-70 (DAFLNQVRKE…ISTISPLRPV (61 aa)).

The protein belongs to the Hfq family. As to quaternary structure, homohexamer.

Functionally, RNA chaperone that binds small regulatory RNA (sRNAs) and mRNAs to facilitate mRNA translational regulation in response to envelope stress, environmental stress and changes in metabolite concentrations. Also binds with high specificity to tRNAs. The protein is RNA-binding protein Hfq of Desulforamulus reducens (strain ATCC BAA-1160 / DSM 100696 / MI-1) (Desulfotomaculum reducens).